Consider the following 1045-residue polypeptide: B3 domain-containing protein REM13 (1045 aa).

Residues 7–96 (YPQFFHTLVP…VFHVSNLGPN (90 aa)) constitute a DNA-binding region (TF-B3 1). A disordered region spans residues 121 to 147 (NNGDVCDSEELPKEKKAKTNSEEADAV). The segment covering 130-141 (ELPKEKKAKTNS) has biased composition (basic and acidic residues). DNA-binding regions (TF-B3) lie at residues 157-253 (CFMA…FCPT) and 305-398 (FVTF…CSPE). The segment at 423-449 (NRDKISNNDKEENMSWERKKDHLKSRD) is disordered. A DNA-binding region (TF-B3 4) is located at residues 474-570 (SNDSCLVVVS…TPVLSLCPAD (97 aa)). The interval 606–625 (IKDDNSKEKNDKEESKSVDG) is disordered. 3 DNA-binding regions (TF-B3) span residues 643–738 (FVTL…LRTE), 815–910 (FVTF…LRTK), and 940–1035 (FVTL…LKFS).

It localises to the nucleus. This Arabidopsis thaliana (Mouse-ear cress) protein is B3 domain-containing protein REM13 (REM13).